The sequence spans 211 residues: Porin MspA (211 aa).

A signal peptide spans 1-27; it reads MKAISRVLIAMVAAIAALFTSTGTSHA.

It belongs to the mycobacterial porin (TC 1.B.24) family. In terms of assembly, forms very stable octamers. Isolated as a 100 kDa complex that can be reduced to monomers upon boiling in 80% dimethyl sulfoxide for 15 minutes. Structures show a goblet with the wide end on the exterior of the outer membrane and a central channel. It is not known if mixed oligomers of MspA with other Msp subunits form in vivo.

It localises to the cell outer membrane. The protein localises to the secreted. Its subcellular location is the cell wall. Functionally, the major porin in this organism, forms a water-filled channel which favors the permeation of cations, amino acids, iron Fe(3+) and less efficiently phosphate. Does not transport Fe-ExoMS, the predominant siderophore. Plays a role in transport of beta-lactamase and hydrophilic fluoroquinolone antibiotics such as norfloxacin as well as chloramphenicol. There are about 2400 porins in wild-type, 800 in an mspA deletion and 150 in a double mspA-mspC deletion. Different conductance values with maxima at 2.3 and 4.6 nanosiemens might be caused by a simultaneous reconstitution of MspA channels into the membrane or by the existence of different MspA conformations. The chain is Porin MspA (mspA) from Mycolicibacterium smegmatis (strain ATCC 700084 / mc(2)155) (Mycobacterium smegmatis).